Here is an 81-residue protein sequence, read N- to C-terminus: ATP synthase subunit c, chloroplastic (81 aa).

A run of 2 helical transmembrane segments spans residues 3 to 23 and 57 to 77; these read PLIS…ASIG and LAFM…LLFA.

The protein belongs to the ATPase C chain family. In terms of assembly, F-type ATPases have 2 components, F(1) - the catalytic core - and F(0) - the membrane proton channel. F(1) has five subunits: alpha(3), beta(3), gamma(1), delta(1), epsilon(1). F(0) has four main subunits: a(1), b(1), b'(1) and c(10-14). The alpha and beta chains form an alternating ring which encloses part of the gamma chain. F(1) is attached to F(0) by a central stalk formed by the gamma and epsilon chains, while a peripheral stalk is formed by the delta, b and b' chains.

The protein localises to the plastid. The protein resides in the chloroplast thylakoid membrane. Its function is as follows. F(1)F(0) ATP synthase produces ATP from ADP in the presence of a proton or sodium gradient. F-type ATPases consist of two structural domains, F(1) containing the extramembraneous catalytic core and F(0) containing the membrane proton channel, linked together by a central stalk and a peripheral stalk. During catalysis, ATP synthesis in the catalytic domain of F(1) is coupled via a rotary mechanism of the central stalk subunits to proton translocation. In terms of biological role, key component of the F(0) channel; it plays a direct role in translocation across the membrane. A homomeric c-ring of between 10-14 subunits forms the central stalk rotor element with the F(1) delta and epsilon subunits. This chain is ATP synthase subunit c, chloroplastic, found in Gossypium barbadense (Sea Island cotton).